Here is a 31-residue protein sequence, read N- to C-terminus: Cytochrome b6-f complex subunit 6 (31 aa).

Residues 3 to 23 (IAIDYFLLVGFCFAFTSGLYL) form a helical membrane-spanning segment.

Belongs to the PetL family. The 4 large subunits of the cytochrome b6-f complex are cytochrome b6, subunit IV (17 kDa polypeptide, PetD), cytochrome f and the Rieske protein, while the 4 small subunits are PetG, PetL, PetM and PetN. The complex functions as a dimer.

The protein resides in the plastid. It localises to the chloroplast thylakoid membrane. Functionally, component of the cytochrome b6-f complex, which mediates electron transfer between photosystem II (PSII) and photosystem I (PSI), cyclic electron flow around PSI, and state transitions. PetL is important for photoautotrophic growth as well as for electron transfer efficiency and stability of the cytochrome b6-f complex. This chain is Cytochrome b6-f complex subunit 6, found in Trieres chinensis (Marine centric diatom).